Consider the following 554-residue polypeptide: Aspartyl/glutamyl-tRNA(Asn/Gln) amidotransferase subunit B (554 aa).

A disordered region spans residues 491–554 (AEQPTAPPPE…TPVSHQDAHA (64 aa)). Residues 502 to 540 (ESAAETPEAPPAVEDAPPEAPTEAITAEAGSAEAITAAS) are compositionally biased toward low complexity.

Belongs to the GatB/GatE family. GatB subfamily. Heterotrimer of A, B and C subunits.

The catalysed reaction is L-glutamyl-tRNA(Gln) + L-glutamine + ATP + H2O = L-glutaminyl-tRNA(Gln) + L-glutamate + ADP + phosphate + H(+). It carries out the reaction L-aspartyl-tRNA(Asn) + L-glutamine + ATP + H2O = L-asparaginyl-tRNA(Asn) + L-glutamate + ADP + phosphate + 2 H(+). Allows the formation of correctly charged Asn-tRNA(Asn) or Gln-tRNA(Gln) through the transamidation of misacylated Asp-tRNA(Asn) or Glu-tRNA(Gln) in organisms which lack either or both of asparaginyl-tRNA or glutaminyl-tRNA synthetases. The reaction takes place in the presence of glutamine and ATP through an activated phospho-Asp-tRNA(Asn) or phospho-Glu-tRNA(Gln). This Gloeobacter violaceus (strain ATCC 29082 / PCC 7421) protein is Aspartyl/glutamyl-tRNA(Asn/Gln) amidotransferase subunit B.